Consider the following 54-residue polypeptide: Large ribosomal subunit protein bL33 (54 aa).

This sequence belongs to the bacterial ribosomal protein bL33 family.

The chain is Large ribosomal subunit protein bL33 from Xylella fastidiosa (strain M23).